The primary structure comprises 86 residues: MANIKSQKKRVLTNEKAHLRNVAVKSGLKTAIRATREAIAAGDKAAAEAAYKVAAQKLDKAAGAGVIHKNQAANRKSGLAVAINAL.

This sequence belongs to the bacterial ribosomal protein bS20 family.

Binds directly to 16S ribosomal RNA. This is Small ribosomal subunit protein bS20 from Bifidobacterium longum (strain DJO10A).